The chain runs to 28 residues: N-acetyl-D-galactosamine-binding lectin subunit A (28 aa).

Belongs to the ribosome-inactivating protein family. Disulfide-linked heterodimer of A and B chains.

It carries out the reaction Endohydrolysis of the N-glycosidic bond at one specific adenosine on the 28S rRNA.. In terms of biological role, gal / GalNAc-specific lectin. Agglutinates both native and trypsin-treated rabbit erythrocytes but not human erythrocytes irrespective of blood group type. This chain is N-acetyl-D-galactosamine-binding lectin subunit A, found in Iris hollandica (Dutch iris).